Consider the following 324-residue polypeptide: tRNA dimethylallyltransferase (324 aa).

Residue 20-27 (GPTASGKS) participates in ATP binding. 22–27 (TASGKS) lines the substrate pocket. Interaction with substrate tRNA stretches follow at residues 45-48 (DSAL), 168-172 (QRLIR), and 284-291 (KRQITWLR).

The protein belongs to the IPP transferase family. As to quaternary structure, monomer. The cofactor is Mg(2+).

The enzyme catalyses adenosine(37) in tRNA + dimethylallyl diphosphate = N(6)-dimethylallyladenosine(37) in tRNA + diphosphate. Catalyzes the transfer of a dimethylallyl group onto the adenine at position 37 in tRNAs that read codons beginning with uridine, leading to the formation of N6-(dimethylallyl)adenosine (i(6)A). The sequence is that of tRNA dimethylallyltransferase from Hydrogenovibrio crunogenus (strain DSM 25203 / XCL-2) (Thiomicrospira crunogena).